The chain runs to 234 residues: Endonuclease NucS (234 aa).

It belongs to the NucS endonuclease family.

The protein localises to the cytoplasm. Functionally, cleaves both 3' and 5' ssDNA extremities of branched DNA structures. The sequence is that of Endonuclease NucS from Bifidobacterium animalis subsp. lactis (strain AD011).